A 66-amino-acid polypeptide reads, in one-letter code: ATP synthase protein 8 (66 aa).

Residues Pro-8–Thr-24 traverse the membrane as a helical segment. The residue at position 54 (Lys-54) is an N6-acetyllysine; alternate. Lys-54 bears the N6-succinyllysine; alternate mark. N6-acetyllysine is present on Lys-57.

The protein belongs to the ATPase protein 8 family. F-type ATPases have 2 components, CF(1) - the catalytic core - and CF(0) - the membrane proton channel. Component of an ATP synthase complex composed of ATP5PB, ATP5MC1, ATP5F1E, ATP5PD, ATP5ME, ATP5PF, ATP5MF, MT-ATP6, MT-ATP8, ATP5F1A, ATP5F1B, ATP5F1D, ATP5F1C, ATP5PO, ATP5MG, ATP5MK and ATP5MJ. Interacts with PRICKLE3.

The protein resides in the mitochondrion membrane. In terms of biological role, mitochondrial membrane ATP synthase (F(1)F(0) ATP synthase or Complex V) produces ATP from ADP in the presence of a proton gradient across the membrane which is generated by electron transport complexes of the respiratory chain. F-type ATPases consist of two structural domains, F(1) - containing the extramembraneous catalytic core and F(0) - containing the membrane proton channel, linked together by a central stalk and a peripheral stalk. During catalysis, ATP synthesis in the catalytic domain of F(1) is coupled via a rotary mechanism of the central stalk subunits to proton translocation. Part of the complex F(0) domain. Minor subunit located with subunit a in the membrane. The chain is ATP synthase protein 8 (MT-ATP8) from Alouatta guariba (Brown howler monkey).